Consider the following 165-residue polypeptide: MQLFSILSLLSSLMCSLTVLGSSASSYVKFPVQKFADIINIGTQDVSTVFKRNEVLNTTVINGIGVYVVKMEIGTPPQTVYLQLDTGSSDMIVNNADIAYCKSMSDGSDYASTDNYELTATFTGPRSTTTSPELITLSALIGVNSMQETHLLLRITRLSSMTYTY.

A signal peptide spans 1–24; that stretch reads MQLFSILSLLSSLMCSLTVLGSSA. N-linked (GlcNAc...) asparagine glycosylation is present at asparagine 57. Positions 67-165 constitute a Peptidase A1 domain; it reads YVVKMEIGTP…TRLSSMTYTY (99 aa).

This sequence belongs to the peptidase A1 family.

This chain is Yapsin-5 (YPS5), found in Saccharomyces cerevisiae (strain ATCC 204508 / S288c) (Baker's yeast).